Reading from the N-terminus, the 845-residue chain is Translation initiation factor IF-2 (845 aa).

A disordered region spans residues 1 to 260 (MSDEQDKPTL…HMTSSGPREK (260 aa)). Over residues 68-81 (APAPAPAAPRPAAP) the composition is skewed to pro residues. Over residues 101 to 140 (REAEEARMAALEENRRREEAERARAAEEERARAEKREEQA) the composition is skewed to basic and acidic residues. Low complexity-rich tracts occupy residues 141–166 (ATKA…APPA) and 173–191 (TAAR…RFTP). Positions 194–215 (ALKRPEPKRPEPKASRGGENRR) are enriched in basic and acidic residues. The 171-residue stretch at 344–514 (PRAPVVTIMG…ALQAEIMELK (171 aa)) folds into the tr-type G domain. A G1 region spans residues 353 to 360 (GHVDHGKT). 353 to 360 (GHVDHGKT) is a binding site for GTP. The segment at 378–382 (GITQH) is G2. Positions 400 to 403 (DTPG) are G3. Residues 400–404 (DTPGH) and 454–457 (NKVD) each bind GTP. Residues 454-457 (NKVD) form a G4 region. The segment at 490-492 (SAL) is G5.

It belongs to the TRAFAC class translation factor GTPase superfamily. Classic translation factor GTPase family. IF-2 subfamily.

The protein localises to the cytoplasm. In terms of biological role, one of the essential components for the initiation of protein synthesis. Protects formylmethionyl-tRNA from spontaneous hydrolysis and promotes its binding to the 30S ribosomal subunits. Also involved in the hydrolysis of GTP during the formation of the 70S ribosomal complex. In Sphingopyxis alaskensis (strain DSM 13593 / LMG 18877 / RB2256) (Sphingomonas alaskensis), this protein is Translation initiation factor IF-2.